The primary structure comprises 87 residues: Small ribosomal subunit protein bS20 (87 aa).

Belongs to the bacterial ribosomal protein bS20 family.

Its function is as follows. Binds directly to 16S ribosomal RNA. This chain is Small ribosomal subunit protein bS20, found in Parvibaculum lavamentivorans (strain DS-1 / DSM 13023 / NCIMB 13966).